The following is a 474-amino-acid chain: tRNA-2-methylthio-N(6)-dimethylallyladenosine synthase (474 aa).

The MTTase N-terminal domain maps to 3–120 (KKLHIKTWGC…LPEMIDQIEA (118 aa)). The [4Fe-4S] cluster site is built by Cys-12, Cys-49, Cys-83, Cys-157, Cys-161, and Cys-164. Residues 143 to 375 (RADGPSAFVS…QDRITQQAMR (233 aa)) form the Radical SAM core domain. In terms of domain architecture, TRAM spans 378-441 (RQMLGTVQRI…TNSLRGNFIR (64 aa)).

It belongs to the methylthiotransferase family. MiaB subfamily. Monomer. It depends on [4Fe-4S] cluster as a cofactor.

The protein localises to the cytoplasm. The enzyme catalyses N(6)-dimethylallyladenosine(37) in tRNA + (sulfur carrier)-SH + AH2 + 2 S-adenosyl-L-methionine = 2-methylsulfanyl-N(6)-dimethylallyladenosine(37) in tRNA + (sulfur carrier)-H + 5'-deoxyadenosine + L-methionine + A + S-adenosyl-L-homocysteine + 2 H(+). Catalyzes the methylthiolation of N6-(dimethylallyl)adenosine (i(6)A), leading to the formation of 2-methylthio-N6-(dimethylallyl)adenosine (ms(2)i(6)A) at position 37 in tRNAs that read codons beginning with uridine. The protein is tRNA-2-methylthio-N(6)-dimethylallyladenosine synthase of Shewanella woodyi (strain ATCC 51908 / MS32).